A 300-amino-acid polypeptide reads, in one-letter code: Tubulin polyglutamylase complex subunit 2 (300 aa).

The interval 257-300 is disordered; sequence KIVIPKKKGPVQPAGGQKGPSGPSGPSTSSTSKSSSGSGNPTRK. Over residues 276 to 300 the composition is skewed to low complexity; it reads PSGPSGPSTSSTSKSSSGSGNPTRK.

Part of the neuronal tubulin polyglutamylase complex which contains TPGS1, TPGS2, TTLL1, LRRC49 and NICN1. Interacts with CSTPP1 and LRRC49.

It localises to the cytoplasm. The protein localises to the cytoskeleton. It is found in the microtubule organizing center. Its subcellular location is the centrosome. The protein resides in the centriolar satellite. Functionally, subunit of the tubulin polyglutamylase complex (TPGC). The complex mediates cilia and flagella polyglutamylation which is essential for their biogenesis and motility. The chain is Tubulin polyglutamylase complex subunit 2 (TPGS2) from Homo sapiens (Human).